A 429-amino-acid polypeptide reads, in one-letter code: Histidinol dehydrogenase (429 aa).

3 residues coordinate NAD(+): Tyr127, Gln188, and Asn211. The substrate site is built by Ser234, Gln256, and His259. Residues Gln256 and His259 each contribute to the Zn(2+) site. Catalysis depends on proton acceptor residues Glu324 and His325. Positions 325, 358, 412, and 417 each coordinate substrate. Asp358 is a Zn(2+) binding site. Residue His417 coordinates Zn(2+).

Belongs to the histidinol dehydrogenase family. The cofactor is Zn(2+).

It catalyses the reaction L-histidinol + 2 NAD(+) + H2O = L-histidine + 2 NADH + 3 H(+). It participates in amino-acid biosynthesis; L-histidine biosynthesis; L-histidine from 5-phospho-alpha-D-ribose 1-diphosphate: step 9/9. Catalyzes the sequential NAD-dependent oxidations of L-histidinol to L-histidinaldehyde and then to L-histidine. In Bacillus cereus (strain ATCC 14579 / DSM 31 / CCUG 7414 / JCM 2152 / NBRC 15305 / NCIMB 9373 / NCTC 2599 / NRRL B-3711), this protein is Histidinol dehydrogenase.